The chain runs to 500 residues: L-arabinose isomerase (500 aa).

Positions 306, 333, 349, and 448 each coordinate Mn(2+).

This sequence belongs to the arabinose isomerase family. It depends on Mn(2+) as a cofactor.

It catalyses the reaction beta-L-arabinopyranose = L-ribulose. It functions in the pathway carbohydrate degradation; L-arabinose degradation via L-ribulose; D-xylulose 5-phosphate from L-arabinose (bacterial route): step 1/3. Functionally, catalyzes the conversion of L-arabinose to L-ribulose. The protein is L-arabinose isomerase of Shewanella sp. (strain MR-7).